Consider the following 262-residue polypeptide: Shikimate dehydrogenase (NADP(+)) (262 aa).

Shikimate is bound by residues 15–17 (SRS) and threonine 62. Lysine 66 serves as the catalytic Proton acceptor. Glutamate 78 provides a ligand contact to NADP(+). The shikimate site is built by asparagine 87 and aspartate 102. Residues 126–130 (GAGGA), 150–155 (NRTLAR), and methionine 214 each bind NADP(+). Tyrosine 216 provides a ligand contact to shikimate. Glycine 236 is a binding site for NADP(+).

This sequence belongs to the shikimate dehydrogenase family. Homodimer.

The enzyme catalyses shikimate + NADP(+) = 3-dehydroshikimate + NADPH + H(+). Its pathway is metabolic intermediate biosynthesis; chorismate biosynthesis; chorismate from D-erythrose 4-phosphate and phosphoenolpyruvate: step 4/7. Its function is as follows. Involved in the biosynthesis of the chorismate, which leads to the biosynthesis of aromatic amino acids. Catalyzes the reversible NADPH linked reduction of 3-dehydroshikimate (DHSA) to yield shikimate (SA). The protein is Shikimate dehydrogenase (NADP(+)) of Acinetobacter baumannii (strain AB0057).